Reading from the N-terminus, the 148-residue chain is uncharacterized protein (148 aa).

This is an uncharacterized protein from Archaeoglobus fulgidus (strain ATCC 49558 / DSM 4304 / JCM 9628 / NBRC 100126 / VC-16).